Here is a 268-residue protein sequence, read N- to C-terminus: Fatty acid elongase sre1 (268 aa).

The next 7 helical transmembrane spans lie at V31–M51, F62–M82, I110–I130, P137–L157, W161–Y181, I198–V218, and A227–G247.

This sequence belongs to the ELO family.

The protein resides in the membrane. The enzyme catalyses a very-long-chain acyl-CoA + malonyl-CoA + H(+) = a very-long-chain 3-oxoacyl-CoA + CO2 + CoA. Its function is as follows. Could be implicated in synthesis of very long chain fatty acids. The protein is Fatty acid elongase sre1 (sre1) of Dictyostelium discoideum (Social amoeba).